An 887-amino-acid polypeptide reads, in one-letter code: Alanine--tRNA ligase (887 aa).

Positions 425–441 (MQEQKSRARSDRREKQQ) are enriched in basic and acidic residues. Positions 425-448 (MQEQKSRARSDRREKQQTGDGAGS) are disordered. Zn(2+) contacts are provided by histidine 569, histidine 573, cysteine 672, and histidine 676.

The protein belongs to the class-II aminoacyl-tRNA synthetase family. It depends on Zn(2+) as a cofactor.

The protein resides in the cytoplasm. The enzyme catalyses tRNA(Ala) + L-alanine + ATP = L-alanyl-tRNA(Ala) + AMP + diphosphate. Its function is as follows. Catalyzes the attachment of alanine to tRNA(Ala) in a two-step reaction: alanine is first activated by ATP to form Ala-AMP and then transferred to the acceptor end of tRNA(Ala). Also edits incorrectly charged Ser-tRNA(Ala) and Gly-tRNA(Ala) via its editing domain. This chain is Alanine--tRNA ligase, found in Chlorobium luteolum (strain DSM 273 / BCRC 81028 / 2530) (Pelodictyon luteolum).